The chain runs to 160 residues: Phosphopantetheine adenylyltransferase (160 aa).

Ser8 serves as a coordination point for substrate. Residues 8 to 9 (SF) and His16 contribute to the ATP site. Substrate is bound by residues Lys40, Thr72, and Arg86. Residues 87 to 89 (GLR), Glu97, and 122 to 128 (YSFLSSS) each bind ATP.

Belongs to the bacterial CoaD family. As to quaternary structure, homohexamer. It depends on Mg(2+) as a cofactor.

Its subcellular location is the cytoplasm. It catalyses the reaction (R)-4'-phosphopantetheine + ATP + H(+) = 3'-dephospho-CoA + diphosphate. Its pathway is cofactor biosynthesis; coenzyme A biosynthesis; CoA from (R)-pantothenate: step 4/5. Reversibly transfers an adenylyl group from ATP to 4'-phosphopantetheine, yielding dephospho-CoA (dPCoA) and pyrophosphate. The protein is Phosphopantetheine adenylyltransferase of Synechococcus sp. (strain CC9311).